A 798-amino-acid chain; its full sequence is Cold shock domain-containing protein E1 (798 aa).

Met-1 carries the post-translational modification N-acetylmethionine. The region spanning 26–87 (ETGVIEKLLT…RTGKPIAVKL (62 aa)) is the CSD 1 domain. Lys-81 is modified (N6-acetyllysine). Lys-91 is covalently cross-linked (Glycyl lysine isopeptide (Lys-Gly) (interchain with G-Cter in SUMO2)). Residue Ser-123 is modified to Phosphoserine. In terms of domain architecture, CSD 2; truncated spans 136 to 179 (VFYLTYTPEDVEGNVQLETGDKINFVIDNNKHTGAVSARNIMLL). In terms of domain architecture, CSD 3 spans 186 to 245 (CQGVVCAMKEAFGFIERGDVVKEIFFHYSEFKGDLETLQPGDDVEFTIKDRNGKEVATDV). The residue at position 276 (Ser-276) is a Phosphoserine. The CSD 4; truncated domain occupies 297–337 (LPFGDKDTKSKVTLLEGDHVRFNISTDRRDKLERATNIEVL). 2 consecutive CSD domains span residues 349 to 410 (EMGV…AIRI) and 447 to 507 (NKGK…ATCV). Ser-514 carries the post-translational modification Phosphoserine. Positions 519–579 (LLGYVATLKD…KGNKVSAEKV (61 aa)) constitute a CSD 7 domain. Ser-584 carries the post-translational modification Phosphoserine. CSD domains lie at 610–670 (PTQT…AYNI) and 674–735 (RRAT…ACNV). In terms of domain architecture, SUZ-C spans 748–789 (PRPDRLVNRLKNITLDDASAPRLMVLRQPRGPDNSMGFGAER). Phosphothreonine is present on Thr-761.

The protein belongs to the UNR family. As to quaternary structure, component of a multi subunit autoregulatory ribonucleoprotein complex (ARC), at least composed of IGF2BP1, PABPC1 and CSDE1. Interacts with STRAP. Part of a complex associated with the FOS mCRD domain and consisting of PABPC1, PAIP1, HNRPD and SYNCRIP. The interaction with PABPC1 is direct and RNA-independent. Interacts with EIF4ENIF1/4E-T.

The protein resides in the cytoplasm. It localises to the stress granule. It is found in the P-body. RNA-binding protein involved in translationally coupled mRNA turnover. Implicated with other RNA-binding proteins in the cytoplasmic deadenylation/translational and decay interplay of the FOS mRNA mediated by the major coding-region determinant of instability (mCRD) domain. Required for efficient formation of stress granules. In terms of biological role, (Microbial infection) Required for internal initiation of translation of human rhinovirus RNA. The sequence is that of Cold shock domain-containing protein E1 from Homo sapiens (Human).